Consider the following 514-residue polypeptide: 2,3-bisphosphoglycerate-independent phosphoglycerate mutase (514 aa).

Positions 14 and 64 each coordinate Mn(2+). The Phosphoserine intermediate role is filled by Ser64. Substrate contacts are provided by residues His125, Arg155–Asp156, Arg187, Arg193, Arg263–Arg266, and Lys336. Asp403, His407, Asp444, His445, and His463 together coordinate Mn(2+).

Belongs to the BPG-independent phosphoglycerate mutase family. Monomer. Requires Mn(2+) as cofactor.

It carries out the reaction (2R)-2-phosphoglycerate = (2R)-3-phosphoglycerate. It participates in carbohydrate degradation; glycolysis; pyruvate from D-glyceraldehyde 3-phosphate: step 3/5. Its function is as follows. Catalyzes the interconversion of 2-phosphoglycerate and 3-phosphoglycerate. This Shewanella pealeana (strain ATCC 700345 / ANG-SQ1) protein is 2,3-bisphosphoglycerate-independent phosphoglycerate mutase.